Here is a 1343-residue protein sequence, read N- to C-terminus: DNA-directed RNA polymerase subunit beta (1343 aa).

The protein belongs to the RNA polymerase beta chain family. As to quaternary structure, the RNAP catalytic core consists of 2 alpha, 1 beta, 1 beta' and 1 omega subunit. When a sigma factor is associated with the core the holoenzyme is formed, which can initiate transcription.

It catalyses the reaction RNA(n) + a ribonucleoside 5'-triphosphate = RNA(n+1) + diphosphate. Its function is as follows. DNA-dependent RNA polymerase catalyzes the transcription of DNA into RNA using the four ribonucleoside triphosphates as substrates. This is DNA-directed RNA polymerase subunit beta from Buchnera aphidicola subsp. Cinara cedri (strain Cc).